Here is an 84-residue protein sequence, read N- to C-terminus: MNRTRLFACLLLAVLILVHESNAQCRRLCYKQRCVTYCRGRGKRSLDETNVGTSDVEKRAFDDSNVPSLVEERELEDEGSFIFD.

The N-terminal stretch at 1 to 23 (MNRTRLFACLLLAVLILVHESNA) is a signal peptide. Glutamine 24 carries the post-translational modification Pyrrolidone carboxylic acid. Intrachain disulfides connect cysteine 25-cysteine 38 and cysteine 29-cysteine 34. Arginine amide is present on arginine 41. Residues 42–84 (GKRSLDETNVGTSDVEKRAFDDSNVPSLVEERELEDEGSFIFD) constitute a propeptide that is removed on maturation.

In hemocytes only, but not in all hemocytes observed.

It is found in the secreted. Active against several Gram-positive bacteria such as Bacillus spp, Staphylococcus spp and E.faecalis, several Gram-negative bacteria such as E.coli, K.pneumoniae, P.aeruginosa and Salmonella spp, filamentous fungi such as N.crassa, T.viridae and yeasts such as C.albicans. It is active against the parasite L.amazonensis as well. It shows hemolytic activity. The sequence is that of Gomesin from Acanthoscurria gomesiana (Tarantula spider).